Consider the following 248-residue polypeptide: Type III pantothenate kinase (248 aa).

Residue 6 to 13 coordinates ATP; that stretch reads DIGNTETK. 103–106 contributes to the substrate binding site; it reads GSDR. Catalysis depends on aspartate 105, which acts as the Proton acceptor. Aspartate 124 lines the K(+) pocket. Position 127 (threonine 127) interacts with ATP. Residue threonine 178 coordinates substrate.

This sequence belongs to the type III pantothenate kinase family. Homodimer. It depends on NH4(+) as a cofactor. K(+) is required as a cofactor.

The protein resides in the cytoplasm. It carries out the reaction (R)-pantothenate + ATP = (R)-4'-phosphopantothenate + ADP + H(+). Its pathway is cofactor biosynthesis; coenzyme A biosynthesis; CoA from (R)-pantothenate: step 1/5. Its function is as follows. Catalyzes the phosphorylation of pantothenate (Pan), the first step in CoA biosynthesis. The polypeptide is Type III pantothenate kinase (Pelagibacter ubique (strain HTCC1062)).